The sequence spans 217 residues: 3-demethoxyubiquinol 3-hydroxylase (217 aa).

Fe cation contacts are provided by E66, E96, H99, E148, E180, and H183.

It belongs to the COQ7 family. The cofactor is Fe cation.

Its subcellular location is the cell membrane. It catalyses the reaction a 5-methoxy-2-methyl-3-(all-trans-polyprenyl)benzene-1,4-diol + AH2 + O2 = a 3-demethylubiquinol + A + H2O. It participates in cofactor biosynthesis; ubiquinone biosynthesis. In terms of biological role, catalyzes the hydroxylation of 2-nonaprenyl-3-methyl-6-methoxy-1,4-benzoquinol during ubiquinone biosynthesis. The protein is 3-demethoxyubiquinol 3-hydroxylase of Xanthomonas campestris pv. campestris (strain 8004).